Here is a 134-residue protein sequence, read N- to C-terminus: uncharacterized protein (134 aa).

Residues 4–24 (NLLILLSLLLVVVAIMWWLYE) traverse the membrane as a helical segment.

The protein localises to the membrane. This is an uncharacterized protein from Invertebrate iridescent virus 6 (IIV-6).